A 154-amino-acid chain; its full sequence is Interleukin-2 (154 aa).

Residues 1–20 (MYRMQLLSCIALSLALVTNS) form the signal peptide. The O-linked (GalNAc...) threonine glycan is linked to Thr-23. Cysteines 78 and 126 form a disulfide.

The protein belongs to the IL-2 family.

It localises to the secreted. Cytokine produced by activated CD4-positive helper T-cells and to a lesser extend activated CD8-positive T-cells and natural killer (NK) cells that plays pivotal roles in the immune response and tolerance. Binds to a receptor complex composed of either the high-affinity trimeric IL-2R (IL2RA/CD25, IL2RB/CD122 and IL2RG/CD132) or the low-affinity dimeric IL-2R (IL2RB and IL2RG). Interaction with the receptor leads to oligomerization and conformation changes in the IL-2R subunits resulting in downstream signaling starting with phosphorylation of JAK1 and JAK3. In turn, JAK1 and JAK3 phosphorylate the receptor to form a docking site leading to the phosphorylation of several substrates including STAT5. This process leads to activation of several pathways including STAT, phosphoinositide-3-kinase/PI3K and mitogen-activated protein kinase/MAPK pathways. Functions as a T-cell growth factor and can increase NK-cell cytolytic activity as well. Promotes strong proliferation of activated B-cells and subsequently immunoglobulin production. Plays a pivotal role in regulating the adaptive immune system by controlling the survival and proliferation of regulatory T-cells, which are required for the maintenance of immune tolerance. Moreover, participates in the differentiation and homeostasis of effector T-cell subsets, including Th1, Th2, Th17 as well as memory CD8-positive T-cells. In Cercocebus atys (Sooty mangabey), this protein is Interleukin-2 (IL2).